The sequence spans 258 residues: Imidazole glycerol phosphate synthase subunit HisF (258 aa).

Catalysis depends on residues aspartate 11 and aspartate 130.

This sequence belongs to the HisA/HisF family. As to quaternary structure, heterodimer of HisH and HisF.

The protein localises to the cytoplasm. It carries out the reaction 5-[(5-phospho-1-deoxy-D-ribulos-1-ylimino)methylamino]-1-(5-phospho-beta-D-ribosyl)imidazole-4-carboxamide + L-glutamine = D-erythro-1-(imidazol-4-yl)glycerol 3-phosphate + 5-amino-1-(5-phospho-beta-D-ribosyl)imidazole-4-carboxamide + L-glutamate + H(+). Its pathway is amino-acid biosynthesis; L-histidine biosynthesis; L-histidine from 5-phospho-alpha-D-ribose 1-diphosphate: step 5/9. IGPS catalyzes the conversion of PRFAR and glutamine to IGP, AICAR and glutamate. The HisF subunit catalyzes the cyclization activity that produces IGP and AICAR from PRFAR using the ammonia provided by the HisH subunit. The sequence is that of Imidazole glycerol phosphate synthase subunit HisF from Rhodospirillum centenum (strain ATCC 51521 / SW).